A 273-amino-acid chain; its full sequence is Zinc finger protein 80 (273 aa).

C2H2-type zinc fingers lie at residues 49-71 (YKCK…QQIH) and 77-99 (YECQ…MRIH). A C2H2-type 3; atypical zinc finger spans residues 105–127 (CKCVECGKVFNRRSHLLCYRQIH). C2H2-type zinc fingers lie at residues 133 to 155 (YECS…RVTH), 161 to 183 (FGCK…MKIH), 189 to 211 (CKCS…SMTH), and 217 to 239 (YECK…TRSH).

The protein belongs to the krueppel C2H2-type zinc-finger protein family.

Its subcellular location is the nucleus. Functionally, may be involved in transcriptional regulation. The polypeptide is Zinc finger protein 80 (ZNF80) (Homo sapiens (Human)).